The following is a 273-amino-acid chain: Probable membrane transporter protein YunE (273 aa).

8 helical membrane passes run 3–23, 50–70, 81–101, 105–125, 157–177, 185–205, 222–242, and 251–271; these read FVIL…IGLG, AIGT…LAYI, LIFF…SKLF, SFSV…MLKA, VGIA…IGGG, MLLF…IIFL, WLYA…GAAI, and IVMI…YEGI.

Belongs to the 4-toluene sulfonate uptake permease (TSUP) (TC 2.A.102) family.

It localises to the cell membrane. The polypeptide is Probable membrane transporter protein YunE (yunE) (Bacillus subtilis (strain 168)).